The primary structure comprises 267 residues: Alpha-tubulin N-acetyltransferase (267 aa).

Residues 1–197 enclose the N-acetyltransferase domain; sequence MDFRAGLENV…NNFVVYSEFF (197 aa). Residues 131-144 and 167-176 contribute to the acetyl-CoA site; these read FYIH…GYGK and SMKMIQFLHK.

The protein belongs to the acetyltransferase ATAT1 family.

The enzyme catalyses L-lysyl-[alpha-tubulin] + acetyl-CoA = N(6)-acetyl-L-lysyl-[alpha-tubulin] + CoA + H(+). Its function is as follows. Specifically acetylates 'Lys-40' in alpha-tubulin on the lumenal side of microtubules. Promotes microtubule destabilization and accelerates microtubule dynamics; this activity may be independent of acetylation activity. Acetylates alpha-tubulin with a slow enzymatic rate, due to a catalytic site that is not optimized for acetyl transfer. Enters the microtubule through each end and diffuses quickly throughout the lumen of microtubules. Acetylates only long/old microtubules because of its slow acetylation rate since it does not have time to act on dynamically unstable microtubules before the enzyme is released. The polypeptide is Alpha-tubulin N-acetyltransferase (Schistosoma japonicum (Blood fluke)).